The chain runs to 89 residues: Small ribosomal subunit protein bS18 (89 aa).

Belongs to the bacterial ribosomal protein bS18 family. As to quaternary structure, part of the 30S ribosomal subunit. Forms a tight heterodimer with protein bS6.

Functionally, binds as a heterodimer with protein bS6 to the central domain of the 16S rRNA, where it helps stabilize the platform of the 30S subunit. The polypeptide is Small ribosomal subunit protein bS18 (Treponema denticola (strain ATCC 35405 / DSM 14222 / CIP 103919 / JCM 8153 / KCTC 15104)).